The primary structure comprises 195 residues: UPF0157 protein BH1888 (195 aa).

The span at 1–12 shows a compositional bias: polar residues; sequence MPPMKDSSNSTP. The segment at 1-21 is disordered; that stretch reads MPPMKDSSNSTPRTDEELQEV.

Belongs to the UPF0157 (GrpB) family.

This chain is UPF0157 protein BH1888, found in Halalkalibacterium halodurans (strain ATCC BAA-125 / DSM 18197 / FERM 7344 / JCM 9153 / C-125) (Bacillus halodurans).